Consider the following 393-residue polypeptide: NAD(P)H-quinone oxidoreductase subunit H, chloroplastic (393 aa).

This sequence belongs to the complex I 49 kDa subunit family. NDH is composed of at least 16 different subunits, 5 of which are encoded in the nucleus.

The protein localises to the plastid. Its subcellular location is the chloroplast thylakoid membrane. The enzyme catalyses a plastoquinone + NADH + (n+1) H(+)(in) = a plastoquinol + NAD(+) + n H(+)(out). It carries out the reaction a plastoquinone + NADPH + (n+1) H(+)(in) = a plastoquinol + NADP(+) + n H(+)(out). In terms of biological role, NDH shuttles electrons from NAD(P)H:plastoquinone, via FMN and iron-sulfur (Fe-S) centers, to quinones in the photosynthetic chain and possibly in a chloroplast respiratory chain. The immediate electron acceptor for the enzyme in this species is believed to be plastoquinone. Couples the redox reaction to proton translocation, and thus conserves the redox energy in a proton gradient. This is NAD(P)H-quinone oxidoreductase subunit H, chloroplastic from Chlorokybus atmophyticus (Soil alga).